The primary structure comprises 652 residues: Probable protein phosphatase 2C 19 (652 aa).

Residues Lys-265–Phe-517 enclose the PPM-type phosphatase domain. Mn(2+)-binding residues include Asp-300, Gly-301, Glu-467, and Asp-508. A disordered region spans residues Ala-524–Glu-567.

This sequence belongs to the PP2C family. It depends on Mg(2+) as a cofactor. Mn(2+) is required as a cofactor.

It catalyses the reaction O-phospho-L-seryl-[protein] + H2O = L-seryl-[protein] + phosphate. The enzyme catalyses O-phospho-L-threonyl-[protein] + H2O = L-threonyl-[protein] + phosphate. In Oryza sativa subsp. japonica (Rice), this protein is Probable protein phosphatase 2C 19.